The chain runs to 272 residues: Aquaporin-11 (272 aa).

Residues 1–14 (MTALRALWSEMQDT) lie on the Cytoplasmic side of the membrane. A helical membrane pass occupies residues 15–35 (CTSLGLMLSVVLLAGLARVVA). Residues 36-47 (RQQQLHRPMAHA) are Lumenal-facing. Residues 48–68 (FVLEFLATLQLCCCTHELLLL) traverse the membrane as a helical segment. Topologically, residues 69 to 75 (SEQEPAH) are cytoplasmic. A helical membrane pass occupies residues 76–96 (PTWPLTLIYFFTLVHGLTLVG). The Lumenal portion of the chain corresponds to 97–167 (TSSNPCGVMM…NPIQVDLPKA (71 aa)). Positions 100-102 (NPC) match the NPC motif. Residues 168–188 (VIVEALCSFIFHSALLNFQEV) form a helical membrane-spanning segment. Residues 189-195 (RPKLRIH) are Cytoplasmic-facing. The chain crosses the membrane as a helical span at residues 196–216 (LLAALITFLVYAGGSLTGAVF). Positions 217–219 (NPA) match the NPA motif. At 217–235 (NPALALSLHFKCFDEAFLQ) the chain is on the lumenal side. A helical transmembrane segment spans residues 236-256 (FFIVYWLAPSLGILLMILMFS). The Cytoplasmic segment spans residues 257–272 (FFLPWLYNNHTINKKE).

Belongs to the MIP/aquaporin (TC 1.A.8) family. AQP11/AQP12 subfamily. In terms of assembly, homodimer; disulfide-linked. Homotetramer. Can also form homomultimer. Not glycosylated. Expressed in retina specifically at retinal Mueller glial cells.

It localises to the endoplasmic reticulum membrane. The protein localises to the cytoplasmic vesicle membrane. It is found in the cell membrane. It catalyses the reaction H2O(in) = H2O(out). It carries out the reaction glycerol(in) = glycerol(out). The enzyme catalyses H2O2(out) = H2O2(in). Functionally, channel protein that facilitates the transport of water, glycerol and hydrogen peroxide across membrane of cell or organelles guaranteeing intracellular homeostasis in several organes like liver, kidney and brain. In situation of stress, participates in endoplasmic reticulum (ER) homeostasis by regulating redox homeostasis through the transport of hydrogen peroxide across the endoplasmic reticulum membrane thereby regulating the oxidative stress through the NADPH oxidase 2 pathway. Plays a role by maintaining an environment suitable for translation or protein foldings in the ER lumen namely by participating in the PKD1 glycosylation processing resulting in regulation of PKD1 membrane trafficking thereby preventing the accumulation of unfolding protein in ER. Plays a role in the proximal tubule function by regulating its endosomal acidification. May play a role in postnatal kidney development. The protein is Aquaporin-11 of Equus caballus (Horse).